The chain runs to 301 residues: Glycine--tRNA ligase alpha subunit (301 aa).

The protein belongs to the class-II aminoacyl-tRNA synthetase family. As to quaternary structure, tetramer of two alpha and two beta subunits.

It localises to the cytoplasm. It catalyses the reaction tRNA(Gly) + glycine + ATP = glycyl-tRNA(Gly) + AMP + diphosphate. The polypeptide is Glycine--tRNA ligase alpha subunit (Bordetella avium (strain 197N)).